Here is a 432-residue protein sequence, read N- to C-terminus: 3-phosphoshikimate 1-carboxyvinyltransferase (432 aa).

The 3-phosphoshikimate site is built by Lys-22, Ser-23, and Arg-27. Lys-22 lines the phosphoenolpyruvate pocket. Phosphoenolpyruvate contacts are provided by Gly-96 and Arg-127. 7 residues coordinate 3-phosphoshikimate: Ser-173, Ser-174, Gln-175, Ser-201, Asp-316, Asn-339, and Lys-343. Phosphoenolpyruvate is bound at residue Gln-175. Asp-316 (proton acceptor) is an active-site residue. Arg-347, Arg-391, and Lys-416 together coordinate phosphoenolpyruvate.

This sequence belongs to the EPSP synthase family. As to quaternary structure, monomer.

It is found in the cytoplasm. It carries out the reaction 3-phosphoshikimate + phosphoenolpyruvate = 5-O-(1-carboxyvinyl)-3-phosphoshikimate + phosphate. It participates in metabolic intermediate biosynthesis; chorismate biosynthesis; chorismate from D-erythrose 4-phosphate and phosphoenolpyruvate: step 6/7. Catalyzes the transfer of the enolpyruvyl moiety of phosphoenolpyruvate (PEP) to the 5-hydroxyl of shikimate-3-phosphate (S3P) to produce enolpyruvyl shikimate-3-phosphate and inorganic phosphate. The protein is 3-phosphoshikimate 1-carboxyvinyltransferase of Actinobacillus pleuropneumoniae serotype 7 (strain AP76).